Here is a 78-residue protein sequence, read N- to C-terminus: DAGNRIAAPACVHFTADWRYTFVTNDCSIDYSVTVAYGDGTDVPCRSANPGDILTFPGYGTRGNEVLGAVLCATDGSA.

2 disulfide bridges follow: cysteine 11/cysteine 27 and cysteine 45/cysteine 72.

Functionally, inhibits mammalian alpha-amylases specifically but has no action on plant and microbial alpha-amylases. This chain is Alpha-amylase inhibitor Haim-1, found in Streptomyces griseosporeus.